Reading from the N-terminus, the 260-residue chain is MSHDDLMLALALADRADELTRVRFGALDLRIDTKPDLTPVTDADRAVESDVRQTLGRDRPGDGVLGEEFGGSTTFTGRQWIVDPIDGTKNFVRGVPVWASLIALLEDGVPSVGVVSAPALQRRWWAARGRGAFASVDGARPHRLSVSSVAELHSASLSFSSLSGWARPGLRERFIGLTDTVWRVRAYGDFLSYCLVAEGAVDIAAEPQVSVWDLAALDIVVREAGGRLTSLDGVAGPHGGSAVATNGLLHDEVLTRLNAG.

Residues E67, D83, I85, and D86 each contribute to the Mg(2+) site. E67 lines the substrate pocket. Substrate-binding positions include 85–88, R185, and D213; that span reads IDGT. D213 is a Mg(2+) binding site.

It belongs to the inositol monophosphatase superfamily. Mg(2+) serves as cofactor.

It carries out the reaction L-histidinol phosphate + H2O = L-histidinol + phosphate. Its pathway is amino-acid biosynthesis; L-histidine biosynthesis; L-histidine from 5-phospho-alpha-D-ribose 1-diphosphate: step 8/9. In terms of biological role, catalyzes the dephosphorylation of histidinol-phosphate to histidinol, the direct precursor of histidine. This chain is Histidinol-phosphatase (hisN), found in Mycobacterium tuberculosis (strain ATCC 25618 / H37Rv).